The sequence spans 369 residues: Actin-related protein T3 (369 aa).

The protein belongs to the actin family. In terms of assembly, interacts with PFN3. Testis specific (at protein level). Expressed specifically in haploid germ cells.

It localises to the cytoplasm. The protein resides in the cytoskeleton. It is found in the nucleus. In Mus musculus (Mouse), this protein is Actin-related protein T3 (Actrt3).